The primary structure comprises 315 residues: Melanocyte-stimulating hormone receptor (315 aa).

Residues methionine 1 to tyrosine 35 are Extracellular-facing. Asparagine 17 and asparagine 27 each carry an N-linked (GlcNAc...) asparagine glycan. A helical transmembrane segment spans residues valine 36–isoleucine 61. Topologically, residues threonine 62–proline 70 are cytoplasmic. Residues methionine 71–leucine 91 traverse the membrane as a helical segment. The Extracellular segment spans residues glutamate 92 to asparagine 116. Residues leucine 117 to isoleucine 138 traverse the membrane as a helical segment. Residues aspartate 139–arginine 161 lie on the Cytoplasmic side of the membrane. A helical transmembrane segment spans residues alanine 162–tyrosine 181. The Extracellular portion of the chain corresponds to lysine 182 to cysteine 189. Residues leucine 190–phenylalanine 209 form a helical membrane-spanning segment. Topologically, residues threonine 210–alanine 238 are cytoplasmic. A helical transmembrane segment spans residues alanine 239–leucine 264. Residues cysteine 265–asparagine 277 lie on the Extracellular side of the membrane. A helical transmembrane segment spans residues phenylalanine 278 to phenylalanine 298. Over arginine 299 to tryptophan 315 the chain is Cytoplasmic. The S-palmitoyl cysteine moiety is linked to residue cysteine 313.

It belongs to the G-protein coupled receptor 1 family. In terms of assembly, interacts with MGRN1, but does not undergo MGRN1-mediated ubiquitination; this interaction competes with GNAS-binding and thus inhibits agonist-induced cAMP production. Interacts with OPN3; the interaction results in a decrease in MC1R-mediated cAMP signaling and ultimately a decrease in melanin production in melanocytes.

The protein resides in the cell membrane. Functionally, receptor for MSH (alpha, beta and gamma) and ACTH. The activity of this receptor is mediated by G proteins which activate adenylate cyclase. Mediates melanogenesis, the production of eumelanin (black/brown) and phaeomelanin (red/yellow), via regulation of cAMP signaling in melanocytes. The chain is Melanocyte-stimulating hormone receptor (Mc1r) from Mus musculus (Mouse).